The primary structure comprises 274 residues: NADPH-dependent 7-cyano-7-deazaguanine reductase (274 aa).

V80–S82 provides a ligand contact to substrate. S82–K83 lines the NADPH pocket. C181 (thioimide intermediate) is an active-site residue. D188 (proton donor) is an active-site residue. Substrate is bound at residue H220–E221. Residue R249–G250 coordinates NADPH.

Belongs to the GTP cyclohydrolase I family. QueF type 2 subfamily. Homodimer.

It localises to the cytoplasm. It catalyses the reaction 7-aminomethyl-7-carbaguanine + 2 NADP(+) = 7-cyano-7-deazaguanine + 2 NADPH + 3 H(+). The protein operates within tRNA modification; tRNA-queuosine biosynthesis. In terms of biological role, catalyzes the NADPH-dependent reduction of 7-cyano-7-deazaguanine (preQ0) to 7-aminomethyl-7-deazaguanine (preQ1). This Paraburkholderia phymatum (strain DSM 17167 / CIP 108236 / LMG 21445 / STM815) (Burkholderia phymatum) protein is NADPH-dependent 7-cyano-7-deazaguanine reductase.